A 393-amino-acid polypeptide reads, in one-letter code: Small RNA 2'-O-methyltransferase (393 aa).

S-adenosyl-L-methionine contacts are provided by Y36, G55, D78, K83, V115, and I131. Positions 132, 135, 136, and 181 each coordinate Mg(2+). The segment at 286–307 (HLPRRKEQAGERGDKPKDIGGS) is disordered. Over residues 290 to 305 (RKEQAGERGDKPKDIG) the composition is skewed to basic and acidic residues.

It belongs to the methyltransferase superfamily. HEN1 family. Mg(2+) is required as a cofactor.

The protein localises to the cytoplasm. The catalysed reaction is small RNA 3'-end nucleotide + S-adenosyl-L-methionine = small RNA 3'-end 2'-O-methylnucleotide + S-adenosyl-L-homocysteine + H(+). Functionally, methyltransferase that adds a 2'-O-methyl group at the 3'-end of piRNAs, a class of 24 to 30 nucleotide RNAs that are generated by a Dicer-independent mechanism and are primarily derived from transposons and other repeated sequence elements. This probably protects the 3'-end of piRNAs from uridylation activity and subsequent degradation. Stabilization of piRNAs is essential for gametogenesis. The chain is Small RNA 2'-O-methyltransferase (HENMT1) from Homo sapiens (Human).